A 594-amino-acid chain; its full sequence is Cytoplasmic polyadenylation element-binding protein 1 (594 aa).

Positions 1 to 33 (MQHQVKACGDSKSTTRSLQGNRRSGAASLKKPS) are disordered. A compositionally biased stretch (polar residues) spans 11 to 22 (SKSTTRSLQGNR). RRM domains are found at residues 257 to 364 (RKVF…PWRL) and 381 to 452 (RTVF…HAET). The tract at residues 519-560 (TGDQTRILPRPPHHQSSHYSPRSHQMMNHDSMESSNQSRGNT) is disordered. Polar residues predominate over residues 535–560 (SHYSPRSHQMMNHDSMESSNQSRGNT).

Interacts with fbf-1.

In terms of biological role, cytoplasmic polyadenylation element binding protein that binds to and regulates the translation of specific mRNAs. Essential for progression through meiosis. Involved in spermatogenesis. The polypeptide is Cytoplasmic polyadenylation element-binding protein 1 (cpb-1) (Caenorhabditis remanei (Caenorhabditis vulgaris)).